Consider the following 587-residue polypeptide: ATP-dependent zinc metalloprotease FtsH 2 (587 aa).

Topologically, residues 1 to 12 (MSSDRTREVTKR) are cytoplasmic. A helical membrane pass occupies residues 13–33 (ILMVLFGLWLLQFFFLPPLTT). At 34–102 (RPTELSYSAF…EQRYEVTRTP (69 aa)) the chain is on the extracellular side. Residues 103-123 (WWVTLLPTVLWLAVMVGLFAW) traverse the membrane as a helical segment. The Cytoplasmic portion of the chain corresponds to 124–587 (AQKRQAGAFG…GDDVRRILSA (464 aa)). 192-199 (GPPGTGKT) contacts ATP. Position 416 (His-416) interacts with Zn(2+). Residue Glu-417 is part of the active site. Residues His-420 and Asp-492 each coordinate Zn(2+).

This sequence in the central section; belongs to the AAA ATPase family. It in the C-terminal section; belongs to the peptidase M41 family. In terms of assembly, homohexamer. Zn(2+) is required as a cofactor.

It localises to the cell membrane. Functionally, acts as a processive, ATP-dependent zinc metallopeptidase for both cytoplasmic and membrane proteins. Plays a role in the quality control of integral membrane proteins. This Symbiobacterium thermophilum (strain DSM 24528 / JCM 14929 / IAM 14863 / T) protein is ATP-dependent zinc metalloprotease FtsH 2.